The primary structure comprises 488 residues: Glutamate--tRNA ligase (488 aa).

The 'HIGH' region signature appears at 12-22 (PSPTGYMHVGN). Cys109, Cys111, Cys136, and His138 together coordinate Zn(2+). The 'KMSKS' region signature appears at 253-257 (KLSKR). Lys256 provides a ligand contact to ATP.

This sequence belongs to the class-I aminoacyl-tRNA synthetase family. Glutamate--tRNA ligase type 1 subfamily. Monomer. It depends on Zn(2+) as a cofactor.

The protein resides in the cytoplasm. It catalyses the reaction tRNA(Glu) + L-glutamate + ATP = L-glutamyl-tRNA(Glu) + AMP + diphosphate. Functionally, catalyzes the attachment of glutamate to tRNA(Glu) in a two-step reaction: glutamate is first activated by ATP to form Glu-AMP and then transferred to the acceptor end of tRNA(Glu). This is Glutamate--tRNA ligase from Clostridium tetani (strain Massachusetts / E88).